The following is a 452-amino-acid chain: Mitochondrial distribution and morphology protein 34 (452 aa).

Residues 1–196 (MSFRVKGWSD…LPSIIYKMSR (196 aa)) form the SMP-LTD domain.

It belongs to the MDM34 family. As to quaternary structure, component of the ER-mitochondria encounter structure (ERMES) or MDM complex, composed of mmm1, mdm10, mdm12 and mdm34.

The protein localises to the mitochondrion outer membrane. In terms of biological role, component of the ERMES/MDM complex, which serves as a molecular tether to connect the endoplasmic reticulum (ER) and mitochondria. Components of this complex are involved in the control of mitochondrial shape and protein biogenesis, and function in nonvesicular lipid trafficking between the ER and mitochondria. Mdm34 is required for the interaction of the ER-resident membrane protein mmm1 and the outer mitochondrial membrane-resident beta-barrel protein mdm10. The sequence is that of Mitochondrial distribution and morphology protein 34 from Schizosaccharomyces pombe (strain 972 / ATCC 24843) (Fission yeast).